The chain runs to 818 residues: Glycogen phosphorylase (818 aa).

At Lys-667 the chain carries N6-(pyridoxal phosphate)lysine.

This sequence belongs to the glycogen phosphorylase family. The cofactor is pyridoxal 5'-phosphate.

It catalyses the reaction [(1-&gt;4)-alpha-D-glucosyl](n) + phosphate = [(1-&gt;4)-alpha-D-glucosyl](n-1) + alpha-D-glucose 1-phosphate. In terms of biological role, phosphorylase is an important allosteric enzyme in carbohydrate metabolism. Enzymes from different sources differ in their regulatory mechanisms and in their natural substrates. However, all known phosphorylases share catalytic and structural properties. The protein is Glycogen phosphorylase (glgP) of Pasteurella multocida (strain Pm70).